The primary structure comprises 162 residues: Translocator protein 2 (162 aa).

A run of 5 helical transmembrane segments spans residues 3 to 23, 44 to 64, 79 to 99, 103 to 123, and 129 to 149; these read LQGP…CMLI, VILL…YLVW, LGLY…FLAA, GLAL…VFIW, and LAAL…AITY.

Belongs to the TspO/BZRP family. In terms of assembly, homotetramer. May also form homodimer. As to expression, expressed in liver, bone marrow and spleen. In spleen, detected in red pulp but not in white pulp.

It is found in the endoplasmic reticulum membrane. Its subcellular location is the cell membrane. Functionally, cholesterol-binding protein involved in the redistribution of cholesterol from lipid droplets to the endoplasmic reticulum. Required to meet cholesterol demands during erythropoietic differentiation. May play a role in transport processes at the plasma membrane of erythrocytes, including regulating VDAC-mediated ATP export, and import of the heme precursors protoporphyrin IX and 5-aminolevulinic acid. This is Translocator protein 2 (Tspo2) from Mus musculus (Mouse).